The sequence spans 173 residues: DELTA-actitoxin-Oor1b (173 aa).

An N-terminal region region spans residues 6–25; the sequence is GAALGFNVHQTVLKALGQVS. Residues serine 49, valine 82, serine 100, proline 102, tyrosine 128, and tyrosine 133 each coordinate phosphocholine. Residues 100–115 form a trp-rich region, which is important for the binding to lipid membrane region; it reads SVPFDYNLYSNWWDVK.

This sequence belongs to the actinoporin family. Sea anemone subfamily. Octamer or nonamer in membranes. Monomer in the soluble state.

The protein localises to the secreted. It is found in the nematocyst. The protein resides in the target cell membrane. In terms of biological role, pore-forming protein that forms cations-selective hydrophilic pores of around 1 nm and causes cardiac stimulation and cytolysis. Pore formation is a multi-step process that involves specific recognition of membrane sphingomyelin (but neither cholesterol nor phosphatidylcholine) using aromatic rich region and adjacent phosphocholine (POC) binding site, firm binding to the membrane (mainly driven by hydrophobic interactions) accompanied by the transfer of the N-terminal region to the lipid-water interface and finally pore formation after oligomerization of monomers. Cytolytic effects include red blood cells hemolysis, platelet aggregation and lysis, cytotoxic and cytostatic effects on fibroblasts. Lethality in mammals has been ascribed to severe vasospasm of coronary vessels, cardiac arrhythmia, and inotropic effects. The protein is DELTA-actitoxin-Oor1b of Oulactis orientalis (Japan anemone).